Reading from the N-terminus, the 396-residue chain is S-adenosylmethionine synthase (396 aa).

Residue His-16 participates in ATP binding. Asp-18 provides a ligand contact to Mg(2+). Glu-44 is a binding site for K(+). Positions 57 and 100 each coordinate L-methionine. Positions 100–110 (QSVDIAQGVDR) are flexible loop. ATP-binding positions include 165-167 (DAK), 231-232 (KF), Asp-240, 246-247 (RK), Ala-263, and Lys-267. Residue Asp-240 participates in L-methionine binding. Position 271 (Lys-271) interacts with L-methionine.

It belongs to the AdoMet synthase family. In terms of assembly, homotetramer; dimer of dimers. The cofactor is Mg(2+). It depends on K(+) as a cofactor.

It localises to the cytoplasm. It catalyses the reaction L-methionine + ATP + H2O = S-adenosyl-L-methionine + phosphate + diphosphate. It functions in the pathway amino-acid biosynthesis; S-adenosyl-L-methionine biosynthesis; S-adenosyl-L-methionine from L-methionine: step 1/1. Its function is as follows. Catalyzes the formation of S-adenosylmethionine (AdoMet) from methionine and ATP. The overall synthetic reaction is composed of two sequential steps, AdoMet formation and the subsequent tripolyphosphate hydrolysis which occurs prior to release of AdoMet from the enzyme. This chain is S-adenosylmethionine synthase, found in Marinobacter nauticus (strain ATCC 700491 / DSM 11845 / VT8) (Marinobacter aquaeolei).